The following is a 396-amino-acid chain: Cathepsin D (396 aa).

Residues 1 to 18 (MKFLYLFLFAVFAWTSDA) form the signal peptide. The propeptide at 19–61 (IVRIPLKKFRSIRRTLSDSGLNVEQLLAGTNSLQHNQGFPSSN) is activation peptide. Residues 76–393 (YYGEIGLGTP…DRESNRVGFA (318 aa)) form the Peptidase A1 domain. Asp94 is an active-site residue. A disulfide bridge connects residues Cys107 and Cys114. Residue Asn131 is glycosylated (N-linked (GlcNAc...) asparagine). Cys272 and Cys276 are oxidised to a cystine. Residue Asp281 is part of the active site. Residues Cys315 and Cys352 are joined by a disulfide bond.

Belongs to the peptidase A1 family. In terms of assembly, monomer.

The protein localises to the lysosome. The catalysed reaction is Specificity similar to, but narrower than, that of pepsin A. Does not cleave the 4-Gln-|-His-5 bond in B chain of insulin.. With respect to regulation, inhibited by pepstatin. Its function is as follows. Acid protease active in intracellular protein breakdown. In Clupea harengus (Atlantic herring), this protein is Cathepsin D (ctsd).